A 295-amino-acid polypeptide reads, in one-letter code: MWFKRIGLFLLTNILVVVTISIVTSVLGIGPYLDANGLNLSSLVIFCFLWGMGGAFVSLLLSKFMAKMMMGVQIIDPRSASGAERELYSRVERLARAANLPMPEVGIYHSPEVNAFATGPSKSSSLVAVSSGLLQVMDNAEVEGVLAHELAHVANGDMVTMTLIQGIVNAFVMFFSRIISYALSTMVKDEMQYTVRLISNIVLSILFSILGSIVVAYFSRTREYRADAGGAKLVGRQNMIAALEKLRRTFDAPEDERGKEALATMKISGHNKWMALFSTHPPLEARIAALKNSGY.

2 helical membrane passes run 6–26 (IGLFLLTNILVVVTISIVTSV) and 40–60 (LSSLVIFCFLWGMGGAFVSLL). Zn(2+) is bound at residue histidine 148. Glutamate 149 is a catalytic residue. Histidine 152 provides a ligand contact to Zn(2+). The next 2 helical transmembrane spans lie at 163–183 (LIQGIVNAFVMFFSRIISYAL) and 198–218 (ISNIVLSILFSILGSIVVAYF). Residue glutamate 223 coordinates Zn(2+).

The protein belongs to the peptidase M48B family. It depends on Zn(2+) as a cofactor.

The protein resides in the cell inner membrane. This Leptospira borgpetersenii serovar Hardjo-bovis (strain JB197) protein is Protease HtpX homolog.